A 307-amino-acid chain; its full sequence is UPF0749 protein MT1871 (307 aa).

Positions 1–23 are cleaved as a signal peptide; sequence MAESDRLLGGYDPNAGYSAHAGA. 2 helical membrane passes run 67 to 87 and 152 to 172; these read VSWMWQALAATLVAAVFAAAV and VLSLAAASAPVVGPGLTVTVT.

The protein belongs to the UPF0749 family.

The protein localises to the cell membrane. The protein is UPF0749 protein MT1871 of Mycobacterium tuberculosis (strain CDC 1551 / Oshkosh).